Consider the following 82-residue polypeptide: Acyl carrier protein (82 aa).

Residues 4-79 form the Carrier domain; it reads PEMEARLKQI…DALNYIEQKL (76 aa). An O-(pantetheine 4'-phosphoryl)serine modification is found at S39.

It belongs to the acyl carrier protein (ACP) family. 4'-phosphopantetheine is transferred from CoA to a specific serine of apo-ACP by AcpS. This modification is essential for activity because fatty acids are bound in thioester linkage to the sulfhydryl of the prosthetic group.

It localises to the cytoplasm. Its pathway is lipid metabolism; fatty acid biosynthesis. Functionally, carrier of the growing fatty acid chain in fatty acid biosynthesis. The polypeptide is Acyl carrier protein (Roseiflexus castenholzii (strain DSM 13941 / HLO8)).